Here is an 887-residue protein sequence, read N- to C-terminus: E3 ubiquitin-protein ligase NEDD4 (887 aa).

The C2 domain occupies 58-183 (EEEHVLFTAD…TENPRMERPY (126 aa)). Ser-215 carries the phosphoserine modification. The tract at residues 217–549 (DENADQAEEL…LEDSYRRIMG (333 aa)) is mediates interaction with TNIK. Disordered regions lie at residues 236–257 (PDAA…GWEE), 271–290 (ESRR…TDED), and 302–322 (FTTR…ESPE). The segment covering 243 to 253 (PHPPEPSPLPP) has biased composition (pro residues). Residues 249-282 (SPLPPGWEERQDVLGRTYYVNHESRRTQWKRPSP) form the WW 1 domain. At Thr-287 the chain carries Phosphothreonine. A Phosphoserine modification is found at Ser-309. The short motif at 354-364 (LAEEFNTRLAV) is the Nuclear export signal element. Phosphoserine occurs at positions 380 and 385. WW domains lie at 405 to 438 (SGLP…KPTM) and 460 to 493 (GPLP…DPRL). Positions 552–887 (RADLLKARLW…ENTQGFDGVD (336 aa)) constitute an HECT domain. A Glycyl lysine isopeptide (Lys-Gly) (interchain with G-Cter in ubiquitin) cross-link involves residue Lys-847. The active-site Glycyl thioester intermediate is the Cys-854.

In terms of assembly, interacts with NDFIP1 and NDFIP2; this interaction activates the E3 ubiquitin-protein ligase and may induce its recruitment to exosomes. Interacts with UBE2D2. Binds, in vitro, through the WW2 and WW3 domains, to neural isoforms of ENAH that contain the PPSY motif. Interacts with BEAN1, LITAF, RNF11, WBP1, WBP2, PMEPAI and PRRG2. Interacts with murine leukemia virus Gag polyprotein (via PPXY motif). Interacts (via C2 domain) with GRB10 (via SH2 domain). Interacts with ERBB4. Interacts with TNIK; the interaction is direct, allows the TNIK-dependent recruitment of RAP2A and its ubiquitination by NEDD4. Interacts (via WW3 domain) with TNK2; EGF promotes this interaction. Interacts (via WW3 domain) with FGFR1 (via C-terminus). Interacts with OTUD7B. Interacts with ISG15. Interacts (via WW domain) with RAPGEF2; this interaction leads to ubiquitination and degradation via the proteasome pathway. Interacts (via WW domains) with ARRDC3 (via PPXY motifs). Interacts with LAPTM4B; may play a role in the lysosomal sorting of LAPTM4B. Interacts with ZBTB7B. Interacts with PRRG4 (via cytoplasmic domain). Interacts directly with LDLRAD3; this interaction promotes NEDD4 auto-ubiquitination. Interacts with ADRB2. Interacts (via WW domains) with DAZAP2 (via PPAY motif). Post-translationally, undergoes 'Lys-29'-linked auto-ubiquitination at Lys-847 and serves as a scaffold for recruiting USP13 to form an NEDD4-USP13 deubiquitination complex. Brain.

It localises to the cytoplasm. Its subcellular location is the nucleus. The protein resides in the cell membrane. The catalysed reaction is S-ubiquitinyl-[E2 ubiquitin-conjugating enzyme]-L-cysteine + [acceptor protein]-L-lysine = [E2 ubiquitin-conjugating enzyme]-L-cysteine + N(6)-ubiquitinyl-[acceptor protein]-L-lysine.. It participates in protein modification; protein ubiquitination. With respect to regulation, activated by NDFIP1- and NDFIP2-binding. E3 ubiquitin-protein ligase which accepts ubiquitin from an E2 ubiquitin-conjugating enzyme in the form of a thioester and then directly transfers the ubiquitin to targeted substrates. Specifically ubiquitinates 'Lys-63' in target proteins. Monoubiquitinates IGF1R at multiple sites, thus leading to receptor internalization and degradation in lysosomes. Ubiquitinates FGFR1, leading to receptor internalization and degradation in lysosomes. Involved in ubiquitination of ERBB4 intracellular domain E4ICD1. Predominantly involved in ubiquitination of membrane bound forms of ERBB4 rather than processed precursors and intermediate membrane-anchored 80 kDa fragments (m80HER4), with a lesser role in ubiquitination of ERBB4 intracellular domain E4ICD1. Promotes ubiquitination of RAPGEF2. Involved in the pathway leading to the degradation of VEGFR-2/KDFR, independently of its ubiquitin-ligase activity. Part of a signaling complex composed of NEDD4, RAP2A and TNIK which regulates neuronal dendrite extension and arborization during development. Ubiquitinates TNK2 and regulates EGF-induced degradation of EGFR and TNF2. Ubiquitinates BRAT1 and this ubiquitination is enhanced in the presence of NDFIP1. Ubiquitinates DAZAP2, leading to its proteasomal degradation. Ubiquitinates POLR2A. Functions as a platform to recruit USP13 to form an NEDD4-USP13 deubiquitination complex that plays a critical role in cleaving the 'Lys-48'-linked ubiquitin chains of VPS34 and then stabilizing VPS34, thus promoting the formation of autophagosomes. This chain is E3 ubiquitin-protein ligase NEDD4 (Nedd4), found in Mus musculus (Mouse).